The sequence spans 493 residues: Glutamate--tRNA ligase (493 aa).

The 'HIGH' region signature appears at 10–20; the sequence is PSPTGDPHVGT. The 'KMSKS' region motif lies at 251-255; the sequence is KLSKR. Position 254 (K254) interacts with ATP.

This sequence belongs to the class-I aminoacyl-tRNA synthetase family. Glutamate--tRNA ligase type 1 subfamily. As to quaternary structure, monomer.

Its subcellular location is the cytoplasm. The catalysed reaction is tRNA(Glu) + L-glutamate + ATP = L-glutamyl-tRNA(Glu) + AMP + diphosphate. Functionally, catalyzes the attachment of glutamate to tRNA(Glu) in a two-step reaction: glutamate is first activated by ATP to form Glu-AMP and then transferred to the acceptor end of tRNA(Glu). The sequence is that of Glutamate--tRNA ligase from Pseudomonas fluorescens (strain Pf0-1).